The following is a 357-amino-acid chain: Peptide chain release factor 1 (357 aa).

N5-methylglutamine is present on Q233.

The protein belongs to the prokaryotic/mitochondrial release factor family. Post-translationally, methylated by PrmC. Methylation increases the termination efficiency of RF1.

It is found in the cytoplasm. In terms of biological role, peptide chain release factor 1 directs the termination of translation in response to the peptide chain termination codons UAG and UAA. The sequence is that of Peptide chain release factor 1 from Flavobacterium psychrophilum (strain ATCC 49511 / DSM 21280 / CIP 103535 / JIP02/86).